The sequence spans 148 residues: Leghemoglobin 29 (148 aa).

Positions 2 to 148 (EFTLRQEALV…LAVAIMKEMS (147 aa)) constitute a Globin domain. Tyrosine 30 is modified (nitrated tyrosine). Serine 45 contacts heme b. Position 45 is a phosphoserine (serine 45). Histidine 63 lines the O2 pocket. Heme b contacts are provided by histidine 95 and lysine 98. Tyrosine 136 carries the nitrated tyrosine modification.

It belongs to the plant globin family. In terms of assembly, monomer. Post-translationally, nitrated in effective nodules and particularly in hypoxic conditions; this mechanism may play a protective role in the symbiosis by buffering toxic peroxynitrite NO(2)(-). Nitration level decrease during nodule senescence. Phosphorylation at Ser-45 disrupts the molecular environment of its porphyrin ring oxygen binding pocket, thus leading to a reduced oxygen consumption and to the delivery of oxygen O(2) to symbiosomes. Accumulates in root nodules after inoculation by bacteria of the genus Rhizobium. Expressed in mycorrhizal roots in the presence of the mycorrhizal fungus Glomus fasciculatum.

Its subcellular location is the cytoplasm. It localises to the cytosol. The protein resides in the nucleus. Leghemoglobin that reversibly binds oxygen O(2) through a pentacoordinated heme iron. In root nodules, facilitates the diffusion of oxygen to the bacteroids while preventing the bacterial nitrogenase from being inactivated by buffering dioxygen, nitric oxide and carbon monoxide, and promoting the formation of reactive oxygen species (ROS, e.g. H(2)O(2)). This role is essential for symbiotic nitrogen fixation (SNF). The chain is Leghemoglobin 29 from Vicia faba (Broad bean).